The following is a 141-amino-acid chain: Large ribosomal subunit protein uL11 (141 aa).

This sequence belongs to the universal ribosomal protein uL11 family. As to quaternary structure, part of the ribosomal stalk of the 50S ribosomal subunit. Interacts with L10 and the large rRNA to form the base of the stalk. L10 forms an elongated spine to which L12 dimers bind in a sequential fashion forming a multimeric L10(L12)X complex. Post-translationally, one or more lysine residues are methylated.

Functionally, forms part of the ribosomal stalk which helps the ribosome interact with GTP-bound translation factors. This chain is Large ribosomal subunit protein uL11, found in Lactobacillus johnsonii (strain CNCM I-12250 / La1 / NCC 533).